The following is a 365-amino-acid chain: Membrane-bound lytic murein transglycosylase C (365 aa).

Residues 1 to 19 (MKKYTKYLPLLLIIPFLAA) form the signal peptide. Cys-20 is lipidated: N-palmitoyl cysteine. Cys-20 carries the S-diacylglycerol cysteine lipid modification.

The protein belongs to the transglycosylase Slt family.

The protein resides in the cell outer membrane. The catalysed reaction is Exolytic cleavage of the (1-&gt;4)-beta-glycosidic linkage between N-acetylmuramic acid (MurNAc) and N-acetylglucosamine (GlcNAc) residues in peptidoglycan, from either the reducing or the non-reducing ends of the peptidoglycan chains, with concomitant formation of a 1,6-anhydrobond in the MurNAc residue.. Functionally, murein-degrading enzyme. May play a role in recycling of muropeptides during cell elongation and/or cell division. In Actinobacillus pleuropneumoniae serotype 5b (strain L20), this protein is Membrane-bound lytic murein transglycosylase C.